Here is a 155-residue protein sequence, read N- to C-terminus: 3-hydroxyacyl-[acyl-carrier-protein] dehydratase FabZ (155 aa).

The active site involves His57.

This sequence belongs to the thioester dehydratase family. FabZ subfamily.

It localises to the cytoplasm. The catalysed reaction is a (3R)-hydroxyacyl-[ACP] = a (2E)-enoyl-[ACP] + H2O. Involved in unsaturated fatty acids biosynthesis. Catalyzes the dehydration of short chain beta-hydroxyacyl-ACPs and long chain saturated and unsaturated beta-hydroxyacyl-ACPs. In Sorangium cellulosum (strain So ce56) (Polyangium cellulosum (strain So ce56)), this protein is 3-hydroxyacyl-[acyl-carrier-protein] dehydratase FabZ.